Consider the following 129-residue polypeptide: Small ribosomal subunit protein uS11 (129 aa).

It belongs to the universal ribosomal protein uS11 family. Part of the 30S ribosomal subunit. Interacts with proteins S7 and S18. Binds to IF-3.

Its function is as follows. Located on the platform of the 30S subunit, it bridges several disparate RNA helices of the 16S rRNA. Forms part of the Shine-Dalgarno cleft in the 70S ribosome. This Symbiobacterium thermophilum (strain DSM 24528 / JCM 14929 / IAM 14863 / T) protein is Small ribosomal subunit protein uS11.